Reading from the N-terminus, the 317-residue chain is MSEETLSKKQITRLNKLQKRLRREVGSAIADYNMIEEGDTVMCCLSGGKDSYAMLDILVNLLQRAPVNFNLVAVNLDQKQPGFPEDILPAYLDSLKVPYHILEKDTYSIVKDKIPEGKTTCSLCSRLRRGTLYGFAQKIGATKIALGHHRDDIIETMFLNMFYAGKLKAMPPKLLSDDGANVVIRPLAYSREKDIAEYAELKAFPIIPCNLCGSQENLKRAAVKEMLKSWDKQFPGRIETIFTAMQNTSPSQGVDRDQFDFVSLKQDPDAPMKGDVAESDLPAFDFLDLANSGHIDLDAAKRSSDLLKIDVVSTYTP.

The PP-loop motif motif lies at 46–51 (SGGKDS). The [4Fe-4S] cluster site is built by Cys121, Cys124, and Cys212.

Belongs to the TtcA family. In terms of assembly, homodimer. Mg(2+) is required as a cofactor. [4Fe-4S] cluster serves as cofactor.

It is found in the cytoplasm. It catalyses the reaction cytidine(32) in tRNA + S-sulfanyl-L-cysteinyl-[cysteine desulfurase] + AH2 + ATP = 2-thiocytidine(32) in tRNA + L-cysteinyl-[cysteine desulfurase] + A + AMP + diphosphate + H(+). Its pathway is tRNA modification. Its function is as follows. Catalyzes the ATP-dependent 2-thiolation of cytidine in position 32 of tRNA, to form 2-thiocytidine (s(2)C32). The sulfur atoms are provided by the cysteine/cysteine desulfurase (IscS) system. The polypeptide is tRNA-cytidine(32) 2-sulfurtransferase (Shewanella loihica (strain ATCC BAA-1088 / PV-4)).